A 377-amino-acid polypeptide reads, in one-letter code: Succinyl-diaminopimelate desuccinylase (377 aa).

H67 is a Zn(2+) binding site. The active site involves D69. Residue D100 coordinates Zn(2+). E134 (proton acceptor) is an active-site residue. Residues E135, E163, and H349 each coordinate Zn(2+).

It belongs to the peptidase M20A family. DapE subfamily. Homodimer. Zn(2+) is required as a cofactor. Requires Co(2+) as cofactor.

The catalysed reaction is N-succinyl-(2S,6S)-2,6-diaminopimelate + H2O = (2S,6S)-2,6-diaminopimelate + succinate. It functions in the pathway amino-acid biosynthesis; L-lysine biosynthesis via DAP pathway; LL-2,6-diaminopimelate from (S)-tetrahydrodipicolinate (succinylase route): step 3/3. In terms of biological role, catalyzes the hydrolysis of N-succinyl-L,L-diaminopimelic acid (SDAP), forming succinate and LL-2,6-diaminopimelate (DAP), an intermediate involved in the bacterial biosynthesis of lysine and meso-diaminopimelic acid, an essential component of bacterial cell walls. The protein is Succinyl-diaminopimelate desuccinylase of Shewanella frigidimarina (strain NCIMB 400).